A 150-amino-acid chain; its full sequence is MKVVFLEDVKGRGKKGEIKEVPDGYANNFLIKNKKAEPATGKNLGAVKGRQKAEEKAAAEALAEAEQLKAKMADEKFVVEVKGKSGADGRLFGAISTKQIVVALAAQKQIKLDKRKLLLNQPIHALGYTNVPVKLHRDVVANLRVHVSEG.

Belongs to the bacterial ribosomal protein bL9 family.

Binds to the 23S rRNA. The polypeptide is Large ribosomal subunit protein bL9 (Leuconostoc citreum (strain KM20)).